The sequence spans 304 residues: Porphobilinogen deaminase (304 aa).

C240 is subject to S-(dipyrrolylmethanemethyl)cysteine.

The protein belongs to the HMBS family. Monomer. The cofactor is dipyrromethane.

The enzyme catalyses 4 porphobilinogen + H2O = hydroxymethylbilane + 4 NH4(+). It participates in porphyrin-containing compound metabolism; protoporphyrin-IX biosynthesis; coproporphyrinogen-III from 5-aminolevulinate: step 2/4. Functionally, tetrapolymerization of the monopyrrole PBG into the hydroxymethylbilane pre-uroporphyrinogen in several discrete steps. The polypeptide is Porphobilinogen deaminase (Xanthomonas axonopodis pv. citri (strain 306)).